The chain runs to 125 residues: Holo-[acyl-carrier-protein] synthase (125 aa).

Residues glutamate 9 and glutamine 58 each contribute to the Mg(2+) site.

The protein belongs to the P-Pant transferase superfamily. AcpS family. Requires Mg(2+) as cofactor.

It localises to the cytoplasm. The enzyme catalyses apo-[ACP] + CoA = holo-[ACP] + adenosine 3',5'-bisphosphate + H(+). In terms of biological role, transfers the 4'-phosphopantetheine moiety from coenzyme A to a Ser of acyl-carrier-protein. The protein is Holo-[acyl-carrier-protein] synthase of Rhodopirellula baltica (strain DSM 10527 / NCIMB 13988 / SH1).